A 441-amino-acid polypeptide reads, in one-letter code: pH-response regulator protein palC (441 aa).

The BRO1 domain maps to 3–352; the sequence is ISYTGQLPTT…GAAYAAILQL (350 aa). 2 disordered regions span residues 278–304 and 414–441; these read RKDD…TSSG and KWTP…GSYY.

The protein belongs to the palC family.

In terms of biological role, required for the proteolytic cleavage of the transcription factor RIM101 in response to alkaline ambient pH. The polypeptide is pH-response regulator protein palC (Yarrowia lipolytica (strain CLIB 122 / E 150) (Yeast)).